The sequence spans 702 residues: Phosphoglycerol transferase I (702 aa).

A run of 3 helical transmembrane segments spans residues L5–W24, G73–R95, and G102–Y124.

Belongs to the OpgB family.

The protein resides in the cell inner membrane. The enzyme catalyses a phosphatidylglycerol + a membrane-derived-oligosaccharide D-glucose = a 1,2-diacyl-sn-glycerol + a membrane-derived-oligosaccharide 6-(glycerophospho)-D-glucose.. It functions in the pathway glycan metabolism; osmoregulated periplasmic glucan (OPG) biosynthesis. In terms of biological role, transfers a phosphoglycerol residue from phosphatidylglycerol to the membrane-bound nascent glucan backbones. The polypeptide is Phosphoglycerol transferase I (Xanthomonas axonopodis pv. citri (strain 306)).